The sequence spans 130 residues: Small ribosomal subunit protein uS8 (130 aa).

Belongs to the universal ribosomal protein uS8 family.

This chain is Small ribosomal subunit protein uS8 (rps22), found in Agaricus bisporus (White button mushroom).